The following is a 437-amino-acid chain: Nicotinate phosphoribosyltransferase (437 aa).

Histidine 231 is modified (phosphohistidine; by autocatalysis).

Belongs to the NAPRTase family. In terms of processing, transiently phosphorylated on a His residue during the reaction cycle. Phosphorylation strongly increases the affinity for substrates and increases the rate of nicotinate D-ribonucleotide production. Dephosphorylation regenerates the low-affinity form of the enzyme, leading to product release.

The enzyme catalyses nicotinate + 5-phospho-alpha-D-ribose 1-diphosphate + ATP + H2O = nicotinate beta-D-ribonucleotide + ADP + phosphate + diphosphate. It functions in the pathway cofactor biosynthesis; NAD(+) biosynthesis; nicotinate D-ribonucleotide from nicotinate: step 1/1. In terms of biological role, catalyzes the synthesis of beta-nicotinate D-ribonucleotide from nicotinate and 5-phospho-D-ribose 1-phosphate at the expense of ATP. The protein is Nicotinate phosphoribosyltransferase of Vibrio vulnificus (strain CMCP6).